A 126-amino-acid polypeptide reads, in one-letter code: Holo-[acyl-carrier-protein] synthase (126 aa).

Mg(2+) is bound by residues Asp-9 and Glu-58.

This sequence belongs to the P-Pant transferase superfamily. AcpS family. The cofactor is Mg(2+).

The protein resides in the cytoplasm. It carries out the reaction apo-[ACP] + CoA = holo-[ACP] + adenosine 3',5'-bisphosphate + H(+). In terms of biological role, transfers the 4'-phosphopantetheine moiety from coenzyme A to a Ser of acyl-carrier-protein. This Citrobacter koseri (strain ATCC BAA-895 / CDC 4225-83 / SGSC4696) protein is Holo-[acyl-carrier-protein] synthase.